Reading from the N-terminus, the 337-residue chain is Cobalt-precorrin-5B C(1)-methyltransferase (337 aa).

The protein belongs to the CbiD family.

The catalysed reaction is Co-precorrin-5B + S-adenosyl-L-methionine = Co-precorrin-6A + S-adenosyl-L-homocysteine. It participates in cofactor biosynthesis; adenosylcobalamin biosynthesis; cob(II)yrinate a,c-diamide from sirohydrochlorin (anaerobic route): step 6/10. Functionally, catalyzes the methylation of C-1 in cobalt-precorrin-5B to form cobalt-precorrin-6A. The sequence is that of Cobalt-precorrin-5B C(1)-methyltransferase from Methanoculleus marisnigri (strain ATCC 35101 / DSM 1498 / JR1).